A 2290-amino-acid polypeptide reads, in one-letter code: Protein Ycf2 (2290 aa).

An ATP-binding site is contributed by Gly1644–Ser1651.

Belongs to the Ycf2 family.

It is found in the plastid. The protein localises to the chloroplast stroma. Probable ATPase of unknown function. Its presence in a non-photosynthetic plant (Epifagus virginiana) and experiments in tobacco indicate that it has an essential function which is probably not related to photosynthesis. The sequence is that of Protein Ycf2 from Nasturtium officinale (Watercress).